A 145-amino-acid chain; its full sequence is Large ribosomal subunit protein bL19 (145 aa).

The protein belongs to the bacterial ribosomal protein bL19 family.

This protein is located at the 30S-50S ribosomal subunit interface and may play a role in the structure and function of the aminoacyl-tRNA binding site. The protein is Large ribosomal subunit protein bL19 of Brucella anthropi (strain ATCC 49188 / DSM 6882 / CCUG 24695 / JCM 21032 / LMG 3331 / NBRC 15819 / NCTC 12168 / Alc 37) (Ochrobactrum anthropi).